The primary structure comprises 142 residues: Large-conductance mechanosensitive channel (142 aa).

Transmembrane regions (helical) follow at residues 14–34, 38–58, and 82–102; these read VMDL…VDSV, LVMP…NYFL, and GNFI…FLLI.

Belongs to the MscL family. Homopentamer.

The protein localises to the cell inner membrane. Functionally, channel that opens in response to stretch forces in the membrane lipid bilayer. May participate in the regulation of osmotic pressure changes within the cell. The sequence is that of Large-conductance mechanosensitive channel from Rhizobium meliloti (strain 1021) (Ensifer meliloti).